Here is a 525-residue protein sequence, read N- to C-terminus: Nucleolar complex protein 4 homolog (525 aa).

The next 3 membrane-spanning stretches (helical) occupy residues 305 to 325, 356 to 376, and 384 to 404; these read AAYDIGGAISLSALNGLFVPI, FFHLANIFLSSTHLPVYLVAA, and LSLTAPPTALLILLPFICNLI.

The protein belongs to the CBF/MAK21 family.

It localises to the nucleus membrane. The protein resides in the nucleus. It is found in the nucleolus. The polypeptide is Nucleolar complex protein 4 homolog (noc4l) (Danio rerio (Zebrafish)).